Consider the following 263-residue polypeptide: Proteasome subunit beta type-4 (263 aa).

The residue at position 1 (Met-1) is an N-acetylmethionine. Positions 1–44 (MEAFWESRTGHWAGGPAPGQFYRVPSTPSCLMDPMSAPARPITR) are excised as a propeptide. Ser-26 is subject to Phosphoserine. Residue Tyr-101 is modified to Phosphotyrosine.

It belongs to the peptidase T1B family. The 26S proteasome consists of a 20S proteasome core and two 19S regulatory subunits. The 20S proteasome core is a barrel-shaped complex made of 28 subunits that are arranged in four stacked rings. The two outer rings are each formed by seven alpha subunits, and the two inner rings are formed by seven beta subunits. The proteolytic activity is exerted by three beta-subunits PSMB5, PSMB6 and PSMB7. Forms a ternary complex with SMAD1 and OAZ1 before PSMB4 is incorporated into the 20S proteasome. Interacts with PRPF19.

It localises to the cytoplasm. The protein localises to the nucleus. Non-catalytic component of the 20S core proteasome complex involved in the proteolytic degradation of most intracellular proteins. This complex plays numerous essential roles within the cell by associating with different regulatory particles. Associated with two 19S regulatory particles, forms the 26S proteasome and thus participates in the ATP-dependent degradation of ubiquitinated proteins. The 26S proteasome plays a key role in the maintenance of protein homeostasis by removing misfolded or damaged proteins that could impair cellular functions, and by removing proteins whose functions are no longer required. Associated with the PA200 or PA28, the 20S proteasome mediates ubiquitin-independent protein degradation. This type of proteolysis is required in several pathways including spermatogenesis (20S-PA200 complex) or generation of a subset of MHC class I-presented antigenic peptides (20S-PA28 complex). SMAD1/OAZ1/PSMB4 complex mediates the degradation of the CREBBP/EP300 repressor SNIP1. This Rattus norvegicus (Rat) protein is Proteasome subunit beta type-4 (Psmb4).